Here is an 860-residue protein sequence, read N- to C-terminus: Leucine--tRNA ligase (860 aa).

The short motif at 42–52 (PYPSGRLHMGH) is the 'HIGH' region element. The 'KMSKS' region signature appears at 619-623 (KMSKS). Lys-622 provides a ligand contact to ATP.

The protein belongs to the class-I aminoacyl-tRNA synthetase family.

Its subcellular location is the cytoplasm. The enzyme catalyses tRNA(Leu) + L-leucine + ATP = L-leucyl-tRNA(Leu) + AMP + diphosphate. The protein is Leucine--tRNA ligase of Yersinia pseudotuberculosis serotype I (strain IP32953).